A 520-amino-acid chain; its full sequence is GMP synthase [glutamine-hydrolyzing] (520 aa).

Residues 9-202 (TVLIVDFGSQ…VHKIAGIKGD (194 aa)) enclose the Glutamine amidotransferase type-1 domain. Catalysis depends on Cys-86, which acts as the Nucleophile. Catalysis depends on residues His-176 and Glu-178. The GMPS ATP-PPase domain occupies 203–395 (WTMSAYRAKA…LGLPESFIGR (193 aa)). ATP is bound at residue 230 to 236 (SGGVDSS).

Homodimer.

The catalysed reaction is XMP + L-glutamine + ATP + H2O = GMP + L-glutamate + AMP + diphosphate + 2 H(+). It functions in the pathway purine metabolism; GMP biosynthesis; GMP from XMP (L-Gln route): step 1/1. Catalyzes the synthesis of GMP from XMP. The protein is GMP synthase [glutamine-hydrolyzing] of Sinorhizobium fredii (strain NBRC 101917 / NGR234).